Reading from the N-terminus, the 229-residue chain is Potassium/proton antiporter CemA (229 aa).

The next 4 helical transmembrane spans lie at 7 to 27, 114 to 134, 154 to 174, and 189 to 209; these read FTPL…SLSF, ITCF…LVIL, ILLL…ELMI, and IISG…KYWI.

It belongs to the CemA family.

Its subcellular location is the plastid. It localises to the chloroplast inner membrane. The catalysed reaction is K(+)(in) + H(+)(out) = K(+)(out) + H(+)(in). Its function is as follows. Contributes to K(+)/H(+) antiport activity by supporting proton efflux to control proton extrusion and homeostasis in chloroplasts in a light-dependent manner to modulate photosynthesis. Prevents excessive induction of non-photochemical quenching (NPQ) under continuous-light conditions. Indirectly promotes efficient inorganic carbon uptake into chloroplasts. The sequence is that of Potassium/proton antiporter CemA from Platanus occidentalis (Sycamore).